A 133-amino-acid chain; its full sequence is Small ribosomal subunit protein uS8 (133 aa).

Belongs to the universal ribosomal protein uS8 family. Part of the 30S ribosomal subunit. Contacts proteins S5 and S12.

In terms of biological role, one of the primary rRNA binding proteins, it binds directly to 16S rRNA central domain where it helps coordinate assembly of the platform of the 30S subunit. The chain is Small ribosomal subunit protein uS8 from Chlamydia caviae (strain ATCC VR-813 / DSM 19441 / 03DC25 / GPIC) (Chlamydophila caviae).